We begin with the raw amino-acid sequence, 230 residues long: 2,3-bisphosphoglycerate-dependent phosphoglycerate mutase (230 aa).

Residues 8–15 (RHGESEWN), 21–22 (TG), R60, 87–90 (ERHY), K98, 114–115 (RR), and 183–184 (GN) each bind substrate. The active-site Tele-phosphohistidine intermediate is the H9. E87 (proton donor/acceptor) is an active-site residue.

The protein belongs to the phosphoglycerate mutase family. BPG-dependent PGAM subfamily.

The enzyme catalyses (2R)-2-phosphoglycerate = (2R)-3-phosphoglycerate. It functions in the pathway carbohydrate degradation; glycolysis; pyruvate from D-glyceraldehyde 3-phosphate: step 3/5. Functionally, catalyzes the interconversion of 2-phosphoglycerate and 3-phosphoglycerate. This chain is 2,3-bisphosphoglycerate-dependent phosphoglycerate mutase, found in Streptococcus agalactiae serotype Ia (strain ATCC 27591 / A909 / CDC SS700).